We begin with the raw amino-acid sequence, 117 residues long: Immunoglobulin lambda variable 2 (117 aa).

The first 19 residues, 1-19 (MAWTSLILSLLALCSGASS), serve as a signal peptide directing secretion. Gln20 is subject to Pyrrolidone carboxylic acid. The 98-residue stretch at 20-117 (QAVVTQESAL…FCALWYSTHF (98 aa)) folds into the Ig-like domain.

The protein is Immunoglobulin lambda variable 2 of Mus musculus (Mouse).